The following is a 444-amino-acid chain: Sperm-associated antigen 4 protein (444 aa).

A disordered region spans residues 1-109 (MRRNPRPGSA…GGASEPSGSP (109 aa)). The span at 19–36 (NFYSENSNSSHSATSGDS) shows a compositional bias: low complexity. A run of 2 helical transmembrane segments spans residues 137-159 (FLSLFFQVLSVFLSLVADGLVCV) and 166-188 (IRFLFTAVSLLSIFLAALWWGLL). The stretch at 204 to 241 (LSQYHHRVHSQGQQLQQLQAELSKLHKEVTSVRAAHSE) forms a coiled coil. The SUN domain occupies 267–428 (GASIDLEKTS…YRVRAHGVRI (162 aa)).

Self-associates. Interacts with ODF1. May associate with microtubules. Interacts with SUN3 and SYNE1; suggesting the formation of a LINC complexs; a SUN domain-based heterotrimer of SPAG4 and SUN3 may associate with SYNE1. Interacts with SEPT12 and LMNB1; during spermatogenesis. In terms of tissue distribution, testis specific. Exclusively expressed in spermatids.

The protein localises to the membrane. It is found in the cytoplasm. It localises to the cytoskeleton. Its subcellular location is the flagellum axoneme. The protein resides in the nucleus envelope. The protein localises to the nucleus inner membrane. Functionally, involved in spermatogenesis. Required for sperm head formation but not required to establish and maintain general polarity of the sperm head. Required for anchoring and organization of the manchette. Required for targeting of SUN3 and probably SYNE1 through a probable SUN1:SYNE3 LINC complex to the nuclear envelope and involved in accurate posterior sperm head localization of the complex. May anchor SUN3 the nuclear envelope. Involved in maintenance of the nuclear envelope integrity. May assist the organization and assembly of outer dense fibers (ODFs), a specific structure of the sperm tail. The protein is Sperm-associated antigen 4 protein (Spag4) of Rattus norvegicus (Rat).